Reading from the N-terminus, the 722-residue chain is Polyribonucleotide nucleotidyltransferase (722 aa).

Positions 495 and 501 each coordinate Mg(2+). A KH domain is found at 562 to 621 (PRLLSFRIDPELIGTVIGPGGRTIKGITERTNTKIDIEDGGIVTIASHDGVAAEEAQKII). The region spanning 631–699 (GEVFTGSITR…NRGRINLTLR (69 aa)) is the S1 motif domain.

It belongs to the polyribonucleotide nucleotidyltransferase family. Mg(2+) is required as a cofactor.

The protein resides in the cytoplasm. It catalyses the reaction RNA(n+1) + phosphate = RNA(n) + a ribonucleoside 5'-diphosphate. Functionally, involved in mRNA degradation. Catalyzes the phosphorolysis of single-stranded polyribonucleotides processively in the 3'- to 5'-direction. The sequence is that of Polyribonucleotide nucleotidyltransferase from Prochlorococcus marinus (strain SARG / CCMP1375 / SS120).